Here is a 311-residue protein sequence, read N- to C-terminus: Probable porphobilinogen deaminase (311 aa).

An S-(dipyrrolylmethanemethyl)cysteine modification is found at cysteine 237. Positions 270–289 are disordered; it reads SKTGDKNNPKSLGQSAGEEL.

It belongs to the HMBS family. It depends on dipyrromethane as a cofactor.

The enzyme catalyses 4 porphobilinogen + H2O = hydroxymethylbilane + 4 NH4(+). It participates in porphyrin-containing compound metabolism; protoporphyrin-IX biosynthesis; coproporphyrinogen-III from 5-aminolevulinate: step 2/4. In terms of biological role, tetrapolymerization of the monopyrrole PBG into the hydroxymethylbilane pre-uroporphyrinogen in several discrete steps. The polypeptide is Probable porphobilinogen deaminase (Nitrosopumilus maritimus (strain SCM1)).